Reading from the N-terminus, the 134-residue chain is UPF0102 protein Dshi_2830 (134 aa).

Belongs to the UPF0102 family.

The polypeptide is UPF0102 protein Dshi_2830 (Dinoroseobacter shibae (strain DSM 16493 / NCIMB 14021 / DFL 12)).